The sequence spans 211 residues: ATP phosphoribosyltransferase (211 aa).

Belongs to the ATP phosphoribosyltransferase family. Short subfamily. In terms of assembly, heteromultimer composed of HisG and HisZ subunits.

Its subcellular location is the cytoplasm. It catalyses the reaction 1-(5-phospho-beta-D-ribosyl)-ATP + diphosphate = 5-phospho-alpha-D-ribose 1-diphosphate + ATP. Its pathway is amino-acid biosynthesis; L-histidine biosynthesis; L-histidine from 5-phospho-alpha-D-ribose 1-diphosphate: step 1/9. Catalyzes the condensation of ATP and 5-phosphoribose 1-diphosphate to form N'-(5'-phosphoribosyl)-ATP (PR-ATP). Has a crucial role in the pathway because the rate of histidine biosynthesis seems to be controlled primarily by regulation of HisG enzymatic activity. In Pseudomonas entomophila (strain L48), this protein is ATP phosphoribosyltransferase.